A 281-amino-acid chain; its full sequence is Bifunctional protein FolD (281 aa).

NADP(+) is bound by residues 165 to 167 (GRG), Thr-192, and Val-233.

The protein belongs to the tetrahydrofolate dehydrogenase/cyclohydrolase family. Homodimer.

It catalyses the reaction (6R)-5,10-methylene-5,6,7,8-tetrahydrofolate + NADP(+) = (6R)-5,10-methenyltetrahydrofolate + NADPH. The enzyme catalyses (6R)-5,10-methenyltetrahydrofolate + H2O = (6R)-10-formyltetrahydrofolate + H(+). It functions in the pathway one-carbon metabolism; tetrahydrofolate interconversion. Its function is as follows. Catalyzes the oxidation of 5,10-methylenetetrahydrofolate to 5,10-methenyltetrahydrofolate and then the hydrolysis of 5,10-methenyltetrahydrofolate to 10-formyltetrahydrofolate. This is Bifunctional protein FolD from Mycobacterium bovis (strain BCG / Tokyo 172 / ATCC 35737 / TMC 1019).